The chain runs to 500 residues: Aspartyl/glutamyl-tRNA(Asn/Gln) amidotransferase subunit B (500 aa).

It belongs to the GatB/GatE family. GatB subfamily. As to quaternary structure, heterotrimer of A, B and C subunits.

The catalysed reaction is L-glutamyl-tRNA(Gln) + L-glutamine + ATP + H2O = L-glutaminyl-tRNA(Gln) + L-glutamate + ADP + phosphate + H(+). It catalyses the reaction L-aspartyl-tRNA(Asn) + L-glutamine + ATP + H2O = L-asparaginyl-tRNA(Asn) + L-glutamate + ADP + phosphate + 2 H(+). In terms of biological role, allows the formation of correctly charged Asn-tRNA(Asn) or Gln-tRNA(Gln) through the transamidation of misacylated Asp-tRNA(Asn) or Glu-tRNA(Gln) in organisms which lack either or both of asparaginyl-tRNA or glutaminyl-tRNA synthetases. The reaction takes place in the presence of glutamine and ATP through an activated phospho-Asp-tRNA(Asn) or phospho-Glu-tRNA(Gln). The chain is Aspartyl/glutamyl-tRNA(Asn/Gln) amidotransferase subunit B from Allorhizobium ampelinum (strain ATCC BAA-846 / DSM 112012 / S4) (Agrobacterium vitis (strain S4)).